Reading from the N-terminus, the 327-residue chain is Gibberellin 2-beta-dioxygenase 3 (327 aa).

One can recognise a Fe2OG dioxygenase domain in the interval Gly-173 to Pro-278. A 2-oxoglutarate-binding site is contributed by Tyr-183. Fe cation contacts are provided by His-202, Asp-204, and His-259. Residues Arg-269 and Ser-271 each coordinate 2-oxoglutarate.

Belongs to the iron/ascorbate-dependent oxidoreductase family. GA2OX subfamily. The cofactor is L-ascorbate. It depends on Fe(2+) as a cofactor. In terms of tissue distribution, expressed in roots, shoot apex, leaf blades, leaf sheaths, stems and flowers.

It carries out the reaction gibberellin A1 + 2-oxoglutarate + O2 = gibberellin A8 + succinate + CO2. Functionally, catalyzes the 2-beta-hydroxylation of several biologically active gibberellins, leading to the homeostatic regulation of their endogenous level. Catabolism of gibberellins (GAs) plays a central role in plant development. In vitro, converts GA1, GA20, and GA29 to the corresponding 2-beta-hydroxylated products GA8, GA29-catabolite, respectively. This Oryza sativa subsp. japonica (Rice) protein is Gibberellin 2-beta-dioxygenase 3.